The chain runs to 368 residues: F-box protein At3g17710 (368 aa).

The F-box domain maps to 1–46; it reads MASVKLPWDLEEEILSRLPPRSLVRFRTVCKHWNGLFSDKRFVKKH.

This chain is F-box protein At3g17710, found in Arabidopsis thaliana (Mouse-ear cress).